Here is a 160-residue protein sequence, read N- to C-terminus: 6,7-dimethyl-8-ribityllumazine synthase (160 aa).

5-amino-6-(D-ribitylamino)uracil contacts are provided by residues Trp-28, 59–61 (ALE), and 81–83 (CVI). Residue 86–87 (ET) coordinates (2S)-2-hydroxy-3-oxobutyl phosphate. His-89 serves as the catalytic Proton donor. Asn-114 contributes to the 5-amino-6-(D-ribitylamino)uracil binding site. Arg-128 contacts (2S)-2-hydroxy-3-oxobutyl phosphate.

It belongs to the DMRL synthase family.

It catalyses the reaction (2S)-2-hydroxy-3-oxobutyl phosphate + 5-amino-6-(D-ribitylamino)uracil = 6,7-dimethyl-8-(1-D-ribityl)lumazine + phosphate + 2 H2O + H(+). Its pathway is cofactor biosynthesis; riboflavin biosynthesis; riboflavin from 2-hydroxy-3-oxobutyl phosphate and 5-amino-6-(D-ribitylamino)uracil: step 1/2. In terms of biological role, catalyzes the formation of 6,7-dimethyl-8-ribityllumazine by condensation of 5-amino-6-(D-ribitylamino)uracil with 3,4-dihydroxy-2-butanone 4-phosphate. This is the penultimate step in the biosynthesis of riboflavin. In Corynebacterium jeikeium (strain K411), this protein is 6,7-dimethyl-8-ribityllumazine synthase.